Reading from the N-terminus, the 181-residue chain is Peptide deformylase 2 (181 aa).

Positions 109 and 151 each coordinate Fe cation. E152 is a catalytic residue. A Fe cation-binding site is contributed by H155.

The protein belongs to the polypeptide deformylase family. Requires Fe(2+) as cofactor.

It catalyses the reaction N-terminal N-formyl-L-methionyl-[peptide] + H2O = N-terminal L-methionyl-[peptide] + formate. Removes the formyl group from the N-terminal Met of newly synthesized proteins. Requires at least a dipeptide for an efficient rate of reaction. N-terminal L-methionine is a prerequisite for activity but the enzyme has broad specificity at other positions. The polypeptide is Peptide deformylase 2 (Shewanella oneidensis (strain ATCC 700550 / JCM 31522 / CIP 106686 / LMG 19005 / NCIMB 14063 / MR-1)).